The chain runs to 100 residues: Small ribosomal subunit protein uS14 (100 aa).

Belongs to the universal ribosomal protein uS14 family. Part of the 30S ribosomal subunit. Contacts proteins S3 and S10.

In terms of biological role, binds 16S rRNA, required for the assembly of 30S particles and may also be responsible for determining the conformation of the 16S rRNA at the A site. The protein is Small ribosomal subunit protein uS14 of Prochlorococcus marinus (strain MIT 9215).